We begin with the raw amino-acid sequence, 244 residues long: Biosynthetic peptidoglycan transglycosylase (244 aa).

Residues 25-45 (LLLLLAIALLYQSWFLLHIIY) form a helical membrane-spanning segment.

The protein belongs to the glycosyltransferase 51 family.

The protein resides in the cell inner membrane. It carries out the reaction [GlcNAc-(1-&gt;4)-Mur2Ac(oyl-L-Ala-gamma-D-Glu-L-Lys-D-Ala-D-Ala)](n)-di-trans,octa-cis-undecaprenyl diphosphate + beta-D-GlcNAc-(1-&gt;4)-Mur2Ac(oyl-L-Ala-gamma-D-Glu-L-Lys-D-Ala-D-Ala)-di-trans,octa-cis-undecaprenyl diphosphate = [GlcNAc-(1-&gt;4)-Mur2Ac(oyl-L-Ala-gamma-D-Glu-L-Lys-D-Ala-D-Ala)](n+1)-di-trans,octa-cis-undecaprenyl diphosphate + di-trans,octa-cis-undecaprenyl diphosphate + H(+). Its pathway is cell wall biogenesis; peptidoglycan biosynthesis. Functionally, peptidoglycan polymerase that catalyzes glycan chain elongation from lipid-linked precursors. The sequence is that of Biosynthetic peptidoglycan transglycosylase from Nitrosomonas eutropha (strain DSM 101675 / C91 / Nm57).